The primary structure comprises 188 residues: Ribosome-recycling factor (188 aa).

Belongs to the RRF family.

It localises to the cytoplasm. Its function is as follows. Responsible for the release of ribosomes from messenger RNA at the termination of protein biosynthesis. May increase the efficiency of translation by recycling ribosomes from one round of translation to another. The protein is Ribosome-recycling factor of Caulobacter vibrioides (strain NA1000 / CB15N) (Caulobacter crescentus).